Here is a 297-residue protein sequence, read N- to C-terminus: MFKSGFVSIVGRPNVGKSTLMNNVVGEKIAIMSDKPQTTRNTIQAVYTDEEMQIVFLDTPGIHKPKNKLGEFMVKAATEAFKNVDLILFVVDDSKKIGPGDRKIIEDLRSVKTPIILVVNKIDQLDQKDELFDIIKMYDREGIFKEIVPISALKGKNTDTLIKVIQNYLEEGPKYFPDYMITDQPERVLIAELIREKVLHYLNDEIPHGVAVEIEKMKARNDKEIVDVSAVIYCERDSHKGIIIGKNGRKLKGIGKSARQDIELLLGSQINLQLWVKVKENWRNLQNYINNFGYNDK.

An Era-type G domain is found at 3–171; the sequence is KSGFVSIVGR…IKVIQNYLEE (169 aa). The tract at residues 11–18 is G1; sequence GRPNVGKS. 11 to 18 contacts GTP; that stretch reads GRPNVGKS. The tract at residues 37–41 is G2; sequence QTTRN. The tract at residues 58–61 is G3; sequence DTPG. GTP is bound by residues 58-62 and 120-123; these read DTPGI and NKID. The G4 stretch occupies residues 120 to 123; sequence NKID. A G5 region spans residues 150–152; sequence ISA. In terms of domain architecture, KH type-2 spans 194–280; the sequence is IREKVLHYLN…NLQLWVKVKE (87 aa).

The protein belongs to the TRAFAC class TrmE-Era-EngA-EngB-Septin-like GTPase superfamily. Era GTPase family. In terms of assembly, monomer.

The protein resides in the cytoplasm. Its subcellular location is the cell membrane. An essential GTPase that binds both GDP and GTP, with rapid nucleotide exchange. Plays a role in 16S rRNA processing and 30S ribosomal subunit biogenesis and possibly also in cell cycle regulation and energy metabolism. This Clostridioides difficile (strain 630) (Peptoclostridium difficile) protein is GTPase Era.